We begin with the raw amino-acid sequence, 190 residues long: Potassium-transporting ATPase KdpC subunit (190 aa).

A helical transmembrane segment spans residues 10–30 (TFIFLLLITGGVYPLLTTVLG).

This sequence belongs to the KdpC family. As to quaternary structure, the system is composed of three essential subunits: KdpA, KdpB and KdpC.

The protein resides in the cell inner membrane. Functionally, part of the high-affinity ATP-driven potassium transport (or Kdp) system, which catalyzes the hydrolysis of ATP coupled with the electrogenic transport of potassium into the cytoplasm. This subunit acts as a catalytic chaperone that increases the ATP-binding affinity of the ATP-hydrolyzing subunit KdpB by the formation of a transient KdpB/KdpC/ATP ternary complex. The sequence is that of Potassium-transporting ATPase KdpC subunit from Escherichia coli (strain 55989 / EAEC).